A 214-amino-acid polypeptide reads, in one-letter code: ATP phosphoribosyltransferase (214 aa).

It belongs to the ATP phosphoribosyltransferase family. Short subfamily. In terms of assembly, heteromultimer composed of HisG and HisZ subunits.

The protein resides in the cytoplasm. It catalyses the reaction 1-(5-phospho-beta-D-ribosyl)-ATP + diphosphate = 5-phospho-alpha-D-ribose 1-diphosphate + ATP. Its pathway is amino-acid biosynthesis; L-histidine biosynthesis; L-histidine from 5-phospho-alpha-D-ribose 1-diphosphate: step 1/9. Catalyzes the condensation of ATP and 5-phosphoribose 1-diphosphate to form N'-(5'-phosphoribosyl)-ATP (PR-ATP). Has a crucial role in the pathway because the rate of histidine biosynthesis seems to be controlled primarily by regulation of HisG enzymatic activity. The protein is ATP phosphoribosyltransferase of Halorhodospira halophila (strain DSM 244 / SL1) (Ectothiorhodospira halophila (strain DSM 244 / SL1)).